Consider the following 110-residue polypeptide: Nucleoid-associated protein bbp_426 (110 aa).

This sequence belongs to the YbaB/EbfC family. Homodimer.

The protein resides in the cytoplasm. Its subcellular location is the nucleoid. Its function is as follows. Binds to DNA and alters its conformation. May be involved in regulation of gene expression, nucleoid organization and DNA protection. This Buchnera aphidicola subsp. Baizongia pistaciae (strain Bp) protein is Nucleoid-associated protein bbp_426.